We begin with the raw amino-acid sequence, 445 residues long: Glutamate--tRNA ligase 2 (445 aa).

A 'HIGH' region motif is present at residues 10–20 (PSPTGMLHVGN). The 'KMSKS' region signature appears at 240–244 (KISKR). K243 contacts ATP.

This sequence belongs to the class-I aminoacyl-tRNA synthetase family. Glutamate--tRNA ligase type 1 subfamily. In terms of assembly, monomer.

The protein resides in the cytoplasm. The catalysed reaction is tRNA(Glu) + L-glutamate + ATP = L-glutamyl-tRNA(Glu) + AMP + diphosphate. In terms of biological role, catalyzes the attachment of glutamate to tRNA(Glu) in a two-step reaction: glutamate is first activated by ATP to form Glu-AMP and then transferred to the acceptor end of tRNA(Glu). In Rickettsia canadensis (strain McKiel), this protein is Glutamate--tRNA ligase 2.